The sequence spans 313 residues: 4-diphosphocytidyl-2-C-methyl-D-erythritol kinase (313 aa).

K27 is a catalytic residue. 110-120 provides a ligand contact to ATP; it reads PIGGGVGGGSS. D152 is a catalytic residue.

It belongs to the GHMP kinase family. IspE subfamily.

The enzyme catalyses 4-CDP-2-C-methyl-D-erythritol + ATP = 4-CDP-2-C-methyl-D-erythritol 2-phosphate + ADP + H(+). It functions in the pathway isoprenoid biosynthesis; isopentenyl diphosphate biosynthesis via DXP pathway; isopentenyl diphosphate from 1-deoxy-D-xylulose 5-phosphate: step 3/6. In terms of biological role, catalyzes the phosphorylation of the position 2 hydroxy group of 4-diphosphocytidyl-2C-methyl-D-erythritol. The polypeptide is 4-diphosphocytidyl-2-C-methyl-D-erythritol kinase (Histophilus somni (strain 129Pt) (Haemophilus somnus)).